The primary structure comprises 245 residues: Probable transcriptional regulatory protein CPR_1922 (245 aa).

It belongs to the TACO1 family.

It localises to the cytoplasm. The protein is Probable transcriptional regulatory protein CPR_1922 of Clostridium perfringens (strain SM101 / Type A).